The sequence spans 460 residues: Protein unc-93 homolog A (460 aa).

A run of 5 helical transmembrane segments spans residues 7 to 27 (ILIV…LQSL), 41 to 61 (SLSV…PIVI), 68 to 88 (WTIV…FYAS), 89 to 109 (WYTL…LWAA), and 139 to 159 (LFFL…SLIF). N-linked (GlcNAc...) asparagine glycosylation is found at Asn168 and Asn189. The next 6 helical transmembrane spans lie at 203–223 (TLLG…AVFL), 292–312 (FVGY…LLFG), 321–341 (ICLF…LLLW), 345–365 (PNDF…DAIW), 390–410 (LWES…CVSV), and 412–432 (LYIL…VEYL).

The protein belongs to the unc-93 family.

The protein resides in the membrane. The sequence is that of Protein unc-93 homolog A (unc93a) from Xenopus laevis (African clawed frog).